We begin with the raw amino-acid sequence, 119 residues long: Large ribosomal subunit protein uL18 (119 aa).

Belongs to the universal ribosomal protein uL18 family. In terms of assembly, part of the 50S ribosomal subunit; part of the 5S rRNA/L5/L18/L25 subcomplex. Contacts the 5S and 23S rRNAs.

This is one of the proteins that bind and probably mediate the attachment of the 5S RNA into the large ribosomal subunit, where it forms part of the central protuberance. The polypeptide is Large ribosomal subunit protein uL18 (Anaeromyxobacter dehalogenans (strain 2CP-1 / ATCC BAA-258)).